The primary structure comprises 120 residues: UPF0145 protein UNCMA_30400 (120 aa).

It belongs to the UPF0145 family.

In Methanocella arvoryzae (strain DSM 22066 / NBRC 105507 / MRE50), this protein is UPF0145 protein UNCMA_30400.